A 436-amino-acid polypeptide reads, in one-letter code: Adenosylhomocysteinase (436 aa).

Residues Thr62, Asp136, and Glu161 each coordinate substrate. 162–164 (TTT) provides a ligand contact to NAD(+). 2 residues coordinate substrate: Lys191 and Asp195. Residues Asn196, 225–230 (GFGDVG), Glu248, Asn283, 304–306 (IGH), and Asn352 contribute to the NAD(+) site.

Belongs to the adenosylhomocysteinase family. It depends on NAD(+) as a cofactor.

It localises to the cytoplasm. The catalysed reaction is S-adenosyl-L-homocysteine + H2O = L-homocysteine + adenosine. It functions in the pathway amino-acid biosynthesis; L-homocysteine biosynthesis; L-homocysteine from S-adenosyl-L-homocysteine: step 1/1. In terms of biological role, may play a key role in the regulation of the intracellular concentration of adenosylhomocysteine. The protein is Adenosylhomocysteinase of Leptospira interrogans serogroup Icterohaemorrhagiae serovar copenhageni (strain Fiocruz L1-130).